We begin with the raw amino-acid sequence, 270 residues long: NFAT activation molecule 1 (270 aa).

Positions 1 to 42 are cleaved as a signal peptide; it reads MENQPVRWRALPGLPRPPGLPAAPWLLLGVLLLPGTLRLAGG. Residues 43-163 are Extracellular-facing; it reads QSVTHTGLPI…YREPPQSPQK (121 aa). The Ig-like V-type domain maps to 50-150; it reads LPIMASLANT…RGSGTFILVR (101 aa). The cysteines at positions 65 and 114 are disulfide-linked. The N-linked (GlcNAc...) asparagine glycan is linked to asparagine 107. Residues 164–184 form a helical membrane-spanning segment; sequence LLLFGFTGLLSVLSVVGTALL. At 185–270 the chain is on the cytoplasmic side; the sequence is LWNKKRMRGP…GELNLVYENL (86 aa). A disordered region spans residues 190–219; sequence RMRGPGKDPTRKCPDPRSASSPKQHPSESV. The segment covering 194–204 has biased composition (basic and acidic residues); that stretch reads PGKDPTRKCPD. Residues 207-219 are compositionally biased toward polar residues; sequence SASSPKQHPSESV. Residues 209–237 enclose the ITAM domain; sequence SSPKQHPSESVYTALQRRETEVYACIENE. Phosphotyrosine occurs at positions 220 and 231. The interval 234–262 is disordered; sequence IENEDGSSPTAKQSPLSQERPHRFEDDGE. Residues 239 to 250 are compositionally biased toward polar residues; sequence GSSPTAKQSPLS.

No direct interaction with the B-cell antigen receptor (BCR). Interacts with SYK; probably involved in BCR signaling. Interacts with ZAP70. In terms of processing, N-glycosylated. Highly expressed in neutrophils, primary monocytes, mast cells, monocytic cell lines and lymphocytes. Also expressed in spleen B and T-cells, and lung. Expressed at low level in non-immune tissue.

It localises to the cell membrane. Functionally, may function in immune system as a receptor which activates via the calcineurin/NFAT-signaling pathway the downstream cytokine gene promoters. Activates the transcription of IL-13 and TNF-alpha promoters. May be involved in the regulation of B-cell, but not T-cell, development. Overexpression activates downstream effectors without ligand binding or antibody cross-linking. In Homo sapiens (Human), this protein is NFAT activation molecule 1 (NFAM1).